Consider the following 1314-residue polypeptide: Angiotensin-converting enzyme (1314 aa).

The first 35 residues, 1 to 35, serve as a signal peptide directing secretion; it reads MGAASGQRGQGPPSPLLLLWLSLLLLLLPPSPAPA. Topologically, residues 36-1265 are extracellular; it reads LDPGLQPGNF…LEPQQARVGQ (1230 aa). N44, N60, N80, N117, and N166 each carry an N-linked (GlcNAc...) asparagine glycan. Peptidase M2 domains lie at 46-630 and 649-1228; these read SADE…LGWP and VTDE…LGWP. C163 and C171 are oxidised to a cystine. Y237 is a chloride binding site. N-linked (GlcNAc...) asparagine glycosylation is present at N324. A disulfide bridge links C365 with C383. Residue H396 coordinates Zn(2+). E397 acts as the Proton acceptor 1 in catalysis. The Zn(2+) site is built by H400 and E424. N515 is a glycosylation site (N-linked (GlcNAc...) asparagine). The active-site Proton donor 1 is H526. R535 provides a ligand contact to chloride. A disulfide bridge connects residues C551 and C563. N-linked (GlcNAc...) asparagine glycosylation is found at N683, N701, N720, and N766. C763 and C769 are disulfide-bonded. Residues R797 and Y835 each contribute to the chloride site. N948 carries N-linked (GlcNAc...) asparagine glycosylation. Residues C963 and C981 are joined by a disulfide bond. H994 is a Zn(2+) binding site. E995 serves as the catalytic Proton acceptor 2. 2 residues coordinate Zn(2+): H998 and E1022. Chloride contacts are provided by W1096 and R1100. H1124 serves as the catalytic Proton donor 2. Position 1133 (R1133) interacts with chloride. Residues C1149 and C1161 are joined by a disulfide bond. N1197 is a glycosylation site (N-linked (GlcNAc...) asparagine). Residues 1221–1262 form a juxtamembrane stalk region; the sequence is HGETLGWPEYNWTPNTARSEGPFPESGRVNFLGMYLEPQQAR. Residues 1266-1282 traverse the membrane as a helical segment; that stretch reads WVLLFLGVSLLVATLGL. The Cytoplasmic segment spans residues 1283–1314; the sequence is THRLFSIRQHGHSLHRPHRGPQFGSEVELRHS. The interval 1293-1314 is disordered; that stretch reads GHSLHRPHRGPQFGSEVELRHS. S1307 is subject to Phosphoserine.

The protein belongs to the peptidase M2 family. In terms of assembly, monomer and homodimer; homodimerizes following binding to an inhibitor. Interacts with calmodulin (CALM1, CALM2 or CALM3); interaction takes place in the cytoplasmic region and regulates phosphorylation and proteolytic cleavage. Zn(2+) is required as a cofactor. Requires chloride as cofactor. In terms of processing, produced following proteolytic cleavage by secretase enzymes that cleave the transmembrane form in the juxtamembrane stalk region upstream of the transmembrane region. Cleavage can take place at different sites of the juxtamembrane stalk region. Phosphorylated by CK2 on Ser-1307; which allows membrane retention. Phosphorylated on tyrosine residues on its extracellular part, promoting cleavage by secretase enzymes and formation of the soluble form (Angiotensin-converting enzyme, soluble form). Widely expressed with dominant expression in lung and kidney.

Its subcellular location is the cell membrane. The protein localises to the cytoplasm. It localises to the secreted. The enzyme catalyses Release of a C-terminal dipeptide, oligopeptide-|-Xaa-Yaa, when Xaa is not Pro, and Yaa is neither Asp nor Glu. Thus, conversion of angiotensin I to angiotensin II, with increase in vasoconstrictor activity, but no action on angiotensin II.. The catalysed reaction is angiotensin I + H2O = L-histidyl-L-leucine + angiotensin II. It catalyses the reaction bradykinin + H2O = L-Phe-L-Arg + bradykinin(1-7). It carries out the reaction substance P + H2O = substance P(1-9) + L-Leu-L-Met-NH2. The enzyme catalyses substance P + H2O = substance P(1-8) + Gly-L-Leu-L-Met-NH2. The catalysed reaction is substance P + H2O = L-Phe-L-Phe-Gly-L-Leu-L-Met-NH2 + substance P(1-6). It catalyses the reaction neurotensin + H2O = neurotensin(1-11) + L-isoleucyl-L-leucine. It carries out the reaction goralatide + H2O = N-acetyl-L-seryl-L-aspartate + L-lysyl-L-proline. The enzyme catalyses Met-enkephalin + H2O = L-phenylalanyl-L-methionine + L-tyrosylglycylglycine. The catalysed reaction is Leu-enkephalin + H2O = L-tyrosylglycylglycine + L-phenylalanyl-L-leucine. It catalyses the reaction Met-enkephalin-Arg-Phe + H2O = L-arginyl-L-phenylalanine + Met-enkephalin. With respect to regulation, the dipeptidyl carboxypeptidase activity is strongly activated by chloride. The dipeptidyl carboxypeptidase activity is specifically inhibited by lisinopril, captopril and enalaprilat. Strongly inhibited by lisinopril and captopril. Functionally, dipeptidyl carboxypeptidase that removes dipeptides from the C-terminus of a variety of circulating hormones, such as angiotensin I, bradykinin or enkephalins, thereby playing a key role in the regulation of blood pressure, electrolyte homeostasis or synaptic plasticity. Composed of two similar catalytic domains, each possessing a functional active site, with different selectivity for substrates. Plays a major role in the angiotensin-renin system that regulates blood pressure and sodium retention by the kidney by converting angiotensin I to angiotensin II, resulting in an increase of the vasoconstrictor activity of angiotensin. Also able to inactivate bradykinin, a potent vasodilator, and therefore enhance the blood pressure response. Acts as a regulator of synaptic transmission by mediating cleavage of neuropeptide hormones, such as substance P, neurotensin or enkephalins. Catalyzes degradation of different enkephalin neuropeptides (Met-enkephalin, Leu-enkephalin, Met-enkephalin-Arg-Phe and possibly Met-enkephalin-Arg-Gly-Leu). Acts as a regulator of synaptic plasticity in the nucleus accumbens of the brain by mediating cleavage of Met-enkephalin-Arg-Phe, a strong ligand of Mu-type opioid receptor OPRM1, into Met-enkephalin. Met-enkephalin-Arg-Phe cleavage by ACE decreases activation of OPRM1, leading to long-term synaptic potentiation of glutamate release. Also acts as a regulator of hematopoietic stem cell differentiation by mediating degradation of hemoregulatory peptide N-acetyl-SDKP (AcSDKP). Acts as a regulator of cannabinoid signaling pathway by mediating degradation of hemopressin, an antagonist peptide of the cannabinoid receptor CNR1. Involved in amyloid-beta metabolism by catalyzing degradation of Amyloid-beta protein 40 and Amyloid-beta protein 42 peptides, thereby preventing plaque formation. Catalyzes cleavage of cholecystokinin (maturation of Cholecystokinin-8 and Cholecystokinin-5) and Gonadoliberin-1 (both maturation and degradation) hormones. Degradation of hemoregulatory peptide N-acetyl-SDKP (AcSDKP) and amyloid-beta proteins is mediated by the N-terminal catalytic domain, while angiotensin I and cholecystokinin cleavage is mediated by the C-terminal catalytic region. In terms of biological role, soluble form that is released in blood plasma and other body fluids following proteolytic cleavage in the juxtamembrane stalk region. Isoform produced by alternative promoter usage that is specifically expressed in spermatocytes and adult testis, and which is required for male fertility. In contrast to somatic isoforms, only contains one catalytic domain. Acts as a dipeptidyl carboxypeptidase that removes dipeptides from the C-terminus of substrates. The identity of substrates that are needed for male fertility is unknown. May also have a glycosidase activity which releases GPI-anchored proteins from the membrane by cleaving the mannose linkage in the GPI moiety. The GPIase activity was reported to be essential for the egg-binding ability of the sperm. This activity is however unclear and has been challenged by other groups, suggesting that it may be indirect. This Mesocricetus auratus (Golden hamster) protein is Angiotensin-converting enzyme.